A 213-amino-acid chain; its full sequence is Uridine kinase (213 aa).

15 to 22 (GASASGKS) is an ATP binding site.

It belongs to the uridine kinase family.

The protein localises to the cytoplasm. It catalyses the reaction uridine + ATP = UMP + ADP + H(+). The catalysed reaction is cytidine + ATP = CMP + ADP + H(+). It functions in the pathway pyrimidine metabolism; CTP biosynthesis via salvage pathway; CTP from cytidine: step 1/3. Its pathway is pyrimidine metabolism; UMP biosynthesis via salvage pathway; UMP from uridine: step 1/1. This is Uridine kinase from Sodalis glossinidius (strain morsitans).